Consider the following 554-residue polypeptide: Hydroxylamine reductase (554 aa).

[2Fe-2S] cluster is bound by residues C3, C6, C18, and C25. Hybrid [4Fe-2O-2S] cluster is bound by residues H252, E276, C320, C408, C436, C461, E495, and K497. A Cysteine persulfide modification is found at C408.

This sequence belongs to the HCP family. Requires [2Fe-2S] cluster as cofactor. Hybrid [4Fe-2O-2S] cluster is required as a cofactor.

It localises to the cytoplasm. It carries out the reaction A + NH4(+) + H2O = hydroxylamine + AH2 + H(+). Functionally, catalyzes the reduction of hydroxylamine to form NH(3) and H(2)O. This is Hydroxylamine reductase from Shewanella baltica (strain OS185).